The chain runs to 601 residues: Potassium-transporting ATPase potassium-binding subunit (601 aa).

12 helical membrane passes run 6–26 (IMLL…LGLF), 65–85 (SYAI…YAVQ), 136–156 (ALTG…FALI), 179–199 (LYIL…QGVI), 283–303 (FSNF…CFTF), 313–333 (GWAV…IVMT), 367–387 (FGIS…CGAV), 397–417 (MGGF…GGVG), 419–439 (GLYG…LMIG), 458–478 (SIAI…AVLV), 524–544 (MLAI…LAIA), and 566–586 (LFVA…YVPA).

Belongs to the KdpA family. The system is composed of three essential subunits: KdpA, KdpB and KdpC.

It is found in the cell inner membrane. Its function is as follows. Part of the high-affinity ATP-driven potassium transport (or Kdp) system, which catalyzes the hydrolysis of ATP coupled with the electrogenic transport of potassium into the cytoplasm. This subunit binds the periplasmic potassium ions and delivers the ions to the membrane domain of KdpB through an intramembrane tunnel. The polypeptide is Potassium-transporting ATPase potassium-binding subunit (Herminiimonas arsenicoxydans).